Reading from the N-terminus, the 461-residue chain is Asparagine--tRNA ligase (461 aa).

Belongs to the class-II aminoacyl-tRNA synthetase family. As to quaternary structure, homodimer.

The protein resides in the cytoplasm. The enzyme catalyses tRNA(Asn) + L-asparagine + ATP = L-asparaginyl-tRNA(Asn) + AMP + diphosphate + H(+). The sequence is that of Asparagine--tRNA ligase from Solibacter usitatus (strain Ellin6076).